The primary structure comprises 508 residues: Probable cytochrome P450 6d5 (508 aa).

Cysteine 453 contributes to the heme binding site.

Belongs to the cytochrome P450 family. It depends on heme as a cofactor.

Its subcellular location is the endoplasmic reticulum membrane. The protein localises to the microsome membrane. In terms of biological role, may be involved in the metabolism of insect hormones and in the breakdown of synthetic insecticides. The chain is Probable cytochrome P450 6d5 (Cyp6d5) from Drosophila melanogaster (Fruit fly).